A 666-amino-acid chain; its full sequence is ATP-dependent RNA helicase DDX51 (666 aa).

At alanine 2 the chain carries N-acetylalanine. The segment at 9-152 is disordered; sequence YPGPDAAAAA…AAPDGPALEE (144 aa). Residues 10–28 show a composition bias toward low complexity; the sequence is PGPDAAAAAGPEGAEAGAH. Over residues 33 to 48 the composition is skewed to basic and acidic residues; the sequence is ALLERLQSRARERQQQ. Positions 49-58 are enriched in low complexity; the sequence is REPAQTEAAA. Residues 65–75 are compositionally biased toward basic residues; the sequence is RRRRRPRRRRR. 2 positions are modified to phosphoserine: serine 83 and serine 103. The segment covering 97–108 has biased composition (acidic residues); that stretch reads EDAGAESNEEAP. Residues 221–229 carry the Q motif motif; sequence YFPVQAAVI. The 210-residue stretch at 243–452 folds into the Helicase ATP-binding domain; the sequence is GRGGYRPSDL…QLGLHQPRLF (210 aa). Position 256-263 (256-263) interacts with ATP; the sequence is APTGSGKT. The DEAD box signature appears at 371 to 374; the sequence is DEAD. The Helicase C-terminal domain occupies 494–640; the sequence is VVLHLVLEMG…RHELSSKLLQ (147 aa).

It belongs to the DEAD box helicase family. DDX51/DBP6 subfamily.

The protein localises to the nucleus. It is found in the nucleolus. The catalysed reaction is ATP + H2O = ADP + phosphate + H(+). Functionally, ATP-binding RNA helicase involved in the biogenesis of 60S ribosomal subunits. The protein is ATP-dependent RNA helicase DDX51 (DDX51) of Homo sapiens (Human).